Consider the following 245-residue polypeptide: Tegument protein UL51 homolog (245 aa).

A lipid anchor (S-palmitoyl cysteine; by host) is attached at cysteine 10. The interval 225–245 (PVKSNLKSKHKPKRKASLVAV) is disordered. The segment covering 230 to 245 (LKSKHKPKRKASLVAV) has biased composition (basic residues).

Belongs to the herpesviridae UL51 family. In terms of assembly, oligomerizes. Interacts with ORF55; this interaction mediates ORF55 incorporation to virions. Post-translationally, phosphorylated. Palmitoylation is necessary for Golgi localization.

It is found in the virion tegument. It localises to the host cytoplasm. The protein localises to the host Golgi apparatus. In terms of biological role, plays several roles during the time course of infection, including egress of virus particles from the perinuclear space and secondary envelopment of cytoplasmic capsids that bud into specific trans-Golgi network (TGN)-derived membranes. The polypeptide is Tegument protein UL51 homolog (Equine herpesvirus 1 (strain Ab4p) (EHV-1)).